The chain runs to 280 residues: Proteasome subunit beta 2 (280 aa).

A propeptide spans 1 to 52 (MTERERGQGLPAEFFAVGTASFVELLSRTAPQLLPVNRVRDGSHPMPDIPHG) (removed in mature form; by autocatalysis). Threonine 53 functions as the Nucleophile in the catalytic mechanism.

Belongs to the peptidase T1B family. The 20S proteasome core is composed of 14 alpha and 14 beta subunits that assemble into four stacked heptameric rings, resulting in a barrel-shaped structure. The two inner rings, each composed of seven catalytic beta subunits, are sandwiched by two outer rings, each composed of seven alpha subunits. The catalytic chamber with the active sites is on the inside of the barrel. Has a gated structure, the ends of the cylinder being occluded by the N-termini of the alpha-subunits. Is capped by the proteasome-associated ATPase, ARC.

The protein resides in the cytoplasm. It catalyses the reaction Cleavage of peptide bonds with very broad specificity.. The protein operates within protein degradation; proteasomal Pup-dependent pathway. With respect to regulation, the formation of the proteasomal ATPase ARC-20S proteasome complex, likely via the docking of the C-termini of ARC into the intersubunit pockets in the alpha-rings, may trigger opening of the gate for substrate entry. Interconversion between the open-gate and close-gate conformations leads to a dynamic regulation of the 20S proteasome proteolysis activity. Its function is as follows. Component of the proteasome core, a large protease complex with broad specificity involved in protein degradation. This is Proteasome subunit beta 2 from Thermomonospora curvata (strain ATCC 19995 / DSM 43183 / JCM 3096 / KCTC 9072 / NBRC 15933 / NCIMB 10081 / Henssen B9).